We begin with the raw amino-acid sequence, 426 residues long: Serine--tRNA ligase (426 aa).

Position 233 to 235 (233 to 235 (TSE)) interacts with L-serine. 264 to 266 (RSE) is an ATP binding site. E287 is a binding site for L-serine. 351–354 (EISS) is a binding site for ATP. An L-serine-binding site is contributed by S387.

This sequence belongs to the class-II aminoacyl-tRNA synthetase family. Type-1 seryl-tRNA synthetase subfamily. In terms of assembly, homodimer. The tRNA molecule binds across the dimer.

It is found in the cytoplasm. The catalysed reaction is tRNA(Ser) + L-serine + ATP = L-seryl-tRNA(Ser) + AMP + diphosphate + H(+). The enzyme catalyses tRNA(Sec) + L-serine + ATP = L-seryl-tRNA(Sec) + AMP + diphosphate + H(+). It functions in the pathway aminoacyl-tRNA biosynthesis; selenocysteinyl-tRNA(Sec) biosynthesis; L-seryl-tRNA(Sec) from L-serine and tRNA(Sec): step 1/1. In terms of biological role, catalyzes the attachment of serine to tRNA(Ser). Is also able to aminoacylate tRNA(Sec) with serine, to form the misacylated tRNA L-seryl-tRNA(Sec), which will be further converted into selenocysteinyl-tRNA(Sec). The polypeptide is Serine--tRNA ligase (Xylella fastidiosa (strain M12)).